We begin with the raw amino-acid sequence, 161 residues long: Probable chemoreceptor glutamine deamidase CheD (161 aa).

This sequence belongs to the CheD family.

The enzyme catalyses L-glutaminyl-[protein] + H2O = L-glutamyl-[protein] + NH4(+). In terms of biological role, probably deamidates glutamine residues to glutamate on methyl-accepting chemotaxis receptors (MCPs), playing an important role in chemotaxis. This chain is Probable chemoreceptor glutamine deamidase CheD, found in Syntrophomonas wolfei subsp. wolfei (strain DSM 2245B / Goettingen).